Here is a 418-residue protein sequence, read N- to C-terminus: Gamma-glutamyl phosphate reductase (418 aa).

It belongs to the gamma-glutamyl phosphate reductase family.

Its subcellular location is the cytoplasm. It catalyses the reaction L-glutamate 5-semialdehyde + phosphate + NADP(+) = L-glutamyl 5-phosphate + NADPH + H(+). It functions in the pathway amino-acid biosynthesis; L-proline biosynthesis; L-glutamate 5-semialdehyde from L-glutamate: step 2/2. Catalyzes the NADPH-dependent reduction of L-glutamate 5-phosphate into L-glutamate 5-semialdehyde and phosphate. The product spontaneously undergoes cyclization to form 1-pyrroline-5-carboxylate. This Thermodesulfovibrio yellowstonii (strain ATCC 51303 / DSM 11347 / YP87) protein is Gamma-glutamyl phosphate reductase.